A 194-amino-acid chain; its full sequence is UPF0301 protein FTM_0963 (194 aa).

This sequence belongs to the UPF0301 (AlgH) family.

The protein is UPF0301 protein FTM_0963 of Francisella tularensis subsp. mediasiatica (strain FSC147).